The primary structure comprises 105 residues: Large ribosomal subunit protein uL24 (105 aa).

It belongs to the universal ribosomal protein uL24 family. As to quaternary structure, part of the 50S ribosomal subunit.

One of two assembly initiator proteins, it binds directly to the 5'-end of the 23S rRNA, where it nucleates assembly of the 50S subunit. Its function is as follows. One of the proteins that surrounds the polypeptide exit tunnel on the outside of the subunit. This is Large ribosomal subunit protein uL24 from Aeromonas salmonicida (strain A449).